The chain runs to 165 residues: Putative tyrosine-protein phosphatase AMV078 (165 aa).

The region spanning 2–149 (NISNINNDIY…LKFYNSYKNI (148 aa)) is the Tyrosine-protein phosphatase domain. Catalysis depends on Cys94, which acts as the Phosphocysteine intermediate.

The protein belongs to the protein-tyrosine phosphatase family. Non-receptor class dual specificity subfamily.

It carries out the reaction O-phospho-L-tyrosyl-[protein] + H2O = L-tyrosyl-[protein] + phosphate. The protein is Putative tyrosine-protein phosphatase AMV078 of Amsacta moorei entomopoxvirus (AmEPV).